We begin with the raw amino-acid sequence, 389 residues long: MAIGTPLLKGSIKFLLLGSGELGKEVVIEAQRLGIECIAVDRYQNAPAMQVAHKSYVIDMKDYDALMAIIEREEPDYIVPEIEAINTDALIDAEKMGYTVIPTAEATKITMNRELIRRLAAEKLGLKTAKYEFADSLEELRDAVEKLGLPCVVKPIMSSSGKGQSVVRSEEDIEKAWKIAKEGARGIGNRVIVEEFINFDYEITLLTARTAEGTKFCEPIGHVQIDGDYHESWQPHNMSAELKEQAQDIAKKVTDALGGYGIFGVELFVKGDEVIFSEVSPRPHDTGMVTMITQEMSEFEIHVRAILGLPVSTKLIHPGASHVIKAEINKYAPKYHIEDALKVPNTKLRLFGKPNAKVGRRMGVALAYADSVEKARELAEKCAHAVRIE.

N(1)-(5-phospho-beta-D-ribosyl)glycinamide is bound by residues E21–L22 and E81. ATP contacts are provided by residues R113, K154, S159 to Q164, E194 to I197, and E202. One can recognise an ATP-grasp domain in the interval R118–L307. The Mg(2+) site is built by E266 and E278. Residues D285, K353, and R360–R361 each bind N(1)-(5-phospho-beta-D-ribosyl)glycinamide.

This sequence belongs to the PurK/PurT family. In terms of assembly, homodimer.

The catalysed reaction is N(1)-(5-phospho-beta-D-ribosyl)glycinamide + formate + ATP = N(2)-formyl-N(1)-(5-phospho-beta-D-ribosyl)glycinamide + ADP + phosphate + H(+). Its pathway is purine metabolism; IMP biosynthesis via de novo pathway; N(2)-formyl-N(1)-(5-phospho-D-ribosyl)glycinamide from N(1)-(5-phospho-D-ribosyl)glycinamide (formate route): step 1/1. In terms of biological role, involved in the de novo purine biosynthesis. Catalyzes the transfer of formate to 5-phospho-ribosyl-glycinamide (GAR), producing 5-phospho-ribosyl-N-formylglycinamide (FGAR). Formate is provided by PurU via hydrolysis of 10-formyl-tetrahydrofolate. The polypeptide is Formate-dependent phosphoribosylglycinamide formyltransferase (Methanocaldococcus jannaschii (strain ATCC 43067 / DSM 2661 / JAL-1 / JCM 10045 / NBRC 100440) (Methanococcus jannaschii)).